The primary structure comprises 440 residues: Beta-1,3-galactosyl-O-glycosyl-glycoprotein beta-1,6-N-acetylglucosaminyltransferase 3 (440 aa).

The Cytoplasmic segment spans residues 1-12 (MKMTGWKKKLCR). A helical; Signal-anchor for type II membrane protein transmembrane segment spans residues 13–30 (GHHLWALGCYMLLAVVAL). Topologically, residues 31 to 440 (RLSLRLKCDV…RHKAIYGTEL (410 aa)) are lumenal. 4 disulfide bridges follow: Cys-73-Cys-230, Cys-164-Cys-384, Cys-185-Cys-212, and Cys-393-Cys-425. Asn-108 carries an N-linked (GlcNAc...) asparagine glycan.

This sequence belongs to the glycosyltransferase 14 family. In terms of processing, N-glycosylated.

The protein resides in the golgi apparatus membrane. It carries out the reaction a 3-O-[beta-D-galactosyl-(1-&gt;3)-N-acetyl-alpha-D-galactosaminyl]-L-seryl-[protein] + UDP-N-acetyl-alpha-D-glucosamine = 3-O-{beta-D-galactosyl-(1-&gt;3)-[N-acetyl-beta-D-glucosaminyl-(1-&gt;6)]-N-acetyl-alpha-D-galactosaminyl}-L-seryl-[protein] + UDP + H(+). It catalyses the reaction a 3-O-[beta-D-galactosyl-(1-&gt;3)-N-acetyl-alpha-D-galactosaminyl]-L-threonyl-[protein] + UDP-N-acetyl-alpha-D-glucosamine = a 3-O-{beta-D-galactosyl-(1-&gt;3)-[N-acetyl-beta-D-glucosaminyl-(1-&gt;6)]-N-acetyl-alpha-D-galactosaminyl}-L-threonyl-[protein] + UDP + H(+). The enzyme catalyses a beta-D-Gal-(1-&gt;4)-beta-D-GlcNAc-(1-&gt;3)-beta-D-Gal-(1-&gt;4)-beta-D-GlcNAc derivative + UDP-N-acetyl-alpha-D-glucosamine = a beta-D-Gal-(1-&gt;4)-beta-D-GlcNAc-(1-&gt;3)-[beta-D-GlcNAc-(1-&gt;6)]-beta-D-Gal-(1-&gt;4)-N-acetyl-beta-D-glucosaminyl derivative + UDP + H(+). The catalysed reaction is 3-O-[N-acetyl-beta-D-glucosaminyl-(1-&gt;3)-N-acetyl-alpha-D-galactosaminyl]-L-seryl-[protein] + UDP-N-acetyl-alpha-D-glucosamine = 3-O-[N-acetyl-beta-D-glucosaminyl-(1-&gt;3)-[N-acetyl-beta-D-glucosaminyl-(1-&gt;6)]-N-acetyl-alpha-D-galactosaminyl]-L-seryl-[protein] + UDP + H(+). It carries out the reaction a 3-O-[N-acetyl-beta-D-glucosaminyl-(1-&gt;3)-N-acetyl-alpha-D-galactosaminyl]-L-threonyl-[protein] + UDP-N-acetyl-alpha-D-glucosamine = 3-O-[N-acetyl-beta-D-glucosaminyl-(1-&gt;3)-[N-acetyl-beta-D-glucosaminyl-(1-&gt;6)]-N-acetyl-alpha-D-galactosaminyl]-L-threonyl-[protein] + UDP + H(+). It participates in protein modification; protein glycosylation. Functionally, glycosyltransferase that can synthesize all known mucin beta 6 N-acetylglucosaminides. Mediates core 2 and core 4 O-glycan branching, 2 important steps in mucin-type biosynthesis. Also has I-branching enzyme activity by converting linear into branched poly-N-acetyllactosaminoglycans, leading to introduce the blood group I antigen during embryonic development. This Ovis aries (Sheep) protein is Beta-1,3-galactosyl-O-glycosyl-glycoprotein beta-1,6-N-acetylglucosaminyltransferase 3 (GCNT3).